A 214-amino-acid chain; its full sequence is N-(5'-phosphoribosyl)anthranilate isomerase (214 aa).

This sequence belongs to the TrpF family.

The catalysed reaction is N-(5-phospho-beta-D-ribosyl)anthranilate = 1-(2-carboxyphenylamino)-1-deoxy-D-ribulose 5-phosphate. The protein operates within amino-acid biosynthesis; L-tryptophan biosynthesis; L-tryptophan from chorismate: step 3/5. In Haloarcula marismortui (strain ATCC 43049 / DSM 3752 / JCM 8966 / VKM B-1809) (Halobacterium marismortui), this protein is N-(5'-phosphoribosyl)anthranilate isomerase.